Consider the following 333-residue polypeptide: tRNA-modifying protein YgfZ (333 aa).

Residues Trp-33 and Trp-195 each coordinate folate.

This sequence belongs to the tRNA-modifying YgfZ family.

It localises to the cytoplasm. Its function is as follows. Folate-binding protein involved in regulating the level of ATP-DnaA and in the modification of some tRNAs. It is probably a key factor in regulatory networks that act via tRNA modification, such as initiation of chromosomal replication. The protein is tRNA-modifying protein YgfZ of Pectobacterium carotovorum subsp. carotovorum (strain PC1).